The chain runs to 340 residues: Methionine import ATP-binding protein MetN (340 aa).

The ABC transporter domain maps to 8–246 (ISVKNLNKEI…PYSSITEELF (239 aa)). 40-47 (GHSGSGKS) serves as a coordination point for ATP.

It belongs to the ABC transporter superfamily. Methionine importer (TC 3.A.1.24) family. The complex is composed of two ATP-binding proteins (MetN), two transmembrane proteins (MetI) and a solute-binding protein (MetQ).

It localises to the cell inner membrane. It catalyses the reaction L-methionine(out) + ATP + H2O = L-methionine(in) + ADP + phosphate + H(+). The catalysed reaction is D-methionine(out) + ATP + H2O = D-methionine(in) + ADP + phosphate + H(+). Functionally, part of the ABC transporter complex MetNIQ involved in methionine import. Responsible for energy coupling to the transport system. This Chlamydia felis (strain Fe/C-56) (Chlamydophila felis) protein is Methionine import ATP-binding protein MetN.